We begin with the raw amino-acid sequence, 473 residues long: Thermostable beta-glucosidase B (473 aa).

Glu196 serves as the catalytic Proton donor. Catalysis depends on Glu378, which acts as the Nucleophile.

The protein belongs to the glycosyl hydrolase 1 family.

Its subcellular location is the cytoplasm. It carries out the reaction Hydrolysis of terminal, non-reducing beta-D-glucosyl residues with release of beta-D-glucose.. The chain is Thermostable beta-glucosidase B (bglB) from Thermobispora bispora (Microbispora bispora).